The sequence spans 472 residues: 6-phosphogluconate dehydrogenase, decarboxylating (472 aa).

NADP(+)-binding positions include 10–15 (GMAVMG), 33–35 (NRT), 74–76 (VQA), and asparagine 102. Residues asparagine 102 and 128–130 (SGG) contribute to the substrate site. Lysine 184 acts as the Proton acceptor in catalysis. 187 to 188 (HN) contacts substrate. The active-site Proton donor is glutamate 191. Substrate contacts are provided by tyrosine 192, lysine 262, arginine 289, arginine 447, and histidine 453.

The protein belongs to the 6-phosphogluconate dehydrogenase family. As to quaternary structure, homodimer.

The enzyme catalyses 6-phospho-D-gluconate + NADP(+) = D-ribulose 5-phosphate + CO2 + NADPH. The protein operates within carbohydrate degradation; pentose phosphate pathway; D-ribulose 5-phosphate from D-glucose 6-phosphate (oxidative stage): step 3/3. Functionally, catalyzes the oxidative decarboxylation of 6-phosphogluconate to ribulose 5-phosphate and CO(2), with concomitant reduction of NADP to NADPH. The sequence is that of 6-phosphogluconate dehydrogenase, decarboxylating (gnd) from Lactococcus lactis subsp. lactis (strain IL1403) (Streptococcus lactis).